An 813-amino-acid polypeptide reads, in one-letter code: Leucine--tRNA ligase (813 aa).

Positions 40 to 51 (SYPSGSKLHAGH) match the 'HIGH' region motif. The 'KMSKS' region motif lies at 572–576 (KMSKS). An ATP-binding site is contributed by K575.

It belongs to the class-I aminoacyl-tRNA synthetase family.

Its subcellular location is the cytoplasm. The enzyme catalyses tRNA(Leu) + L-leucine + ATP = L-leucyl-tRNA(Leu) + AMP + diphosphate. The sequence is that of Leucine--tRNA ligase from Clostridium botulinum (strain ATCC 19397 / Type A).